The chain runs to 72 residues: MREGIHPEYNHDVVVKCACGNTFTTGSTNKELKVEICSKCHPFFTGKQKIVDAGGRVDKFMKKFNLSNEDVK.

Residues C17, C19, C37, and C40 each coordinate Zn(2+).

The protein belongs to the bacterial ribosomal protein bL31 family. Type A subfamily. Part of the 50S ribosomal subunit. The cofactor is Zn(2+).

In terms of biological role, binds the 23S rRNA. The protein is Large ribosomal subunit protein bL31 of Clostridium botulinum (strain ATCC 19397 / Type A).